Reading from the N-terminus, the 284-residue chain is Four and a half LIM domains protein 5 (284 aa).

The C4-type zinc-finger motif lies at 8-32 (CQYCTASLLGKKYVLKDDSPYCVTC). LIM zinc-binding domains lie at 39 to 100 (NYCE…ECSS), 101 to 160 (KCFH…KEFA), 161 to 220 (HYCN…LYAN), and 223 to 283 (VACS…MDTD).

Interacts with CREM (via the third LIM domain). Interacts (via second LIM domain) with SPAG8. As to expression, testis-specific (at protein level).

It localises to the nucleus. Functionally, may be involved in the regulation of spermatogenesis. Stimulates CREM transcriptional activity in a phosphorylation-independent manner. This Homo sapiens (Human) protein is Four and a half LIM domains protein 5 (FHL5).